The primary structure comprises 431 residues: Forkhead box protein P3 (431 aa).

Residues 1–68 (MPNPRPGKPS…SSLNPMPPSQ (68 aa)) form a disordered region. Positions 10-25 (SAPSLALGPSPGASPS) are enriched in low complexity. A Phosphoserine; by CDK2 modification is found at serine 19. N6-acetyllysine is present on lysine 31. The short motif at 68 to 76 (QLQLPTLPL) is the Nuclear export signal element. Positions 92-96 (LQALL) match the LXXLL motif motif. The essential for transcriptional repressor activity and for interaction with KAT5 and HDAC7 stretch occupies residues 106–190 (LSTVDAHART…STLSAVPQSS (85 aa)). The tract at residues 106–198 (LSTVDAHART…SSYPLLANGV (93 aa)) is interaction with ZFP90. The interval 149–199 (LPPGINVASLEWVSREPALLCTFPNPSAPRKDSTLSAVPQSSYPLLANGVC) is interaction with IKZF4. The segment at 197-222 (GVCKWPGCEKVFEEPEDFLKHCQADH) adopts a C2H2-type zinc-finger fold. Positions 239-248 (VQSLEQQLVL) match the Nuclear export signal motif. The leucine-zipper stretch occupies residues 239–260 (VQSLEQQLVLEKEKLSAMQAHL). Glycyl lysine isopeptide (Lys-Gly) (interchain with G-Cter in ubiquitin) cross-links involve residues lysine 250 and lysine 252. An N6-acetyllysine; alternate mark is found at lysine 263 and lysine 268. Residues lysine 263 and lysine 268 each participate in a glycyl lysine isopeptide (Lys-Gly) (interchain with G-Cter in ubiquitin); alternate cross-link. Residues 278–336 (GSCCIVAAGSQGPVVPAWSGPREAPDSLFAVRRHLWGSHGNSTFPEFLHNMDYFKFHNM) are interaction with RUNX1. A DNA-binding region (fork-head) is located at residues 337 to 423 (RPPFTYATLI…RKKRSQRPSR (87 aa)). Lysine 393 is covalently cross-linked (Glycyl lysine isopeptide (Lys-Gly) (interchain with G-Cter in ubiquitin)). The Nuclear localization signal signature appears at 414–417 (RKKR). Serine 418 carries the post-translational modification Phosphoserine. The propeptide occupies 418 to 431 (SQRPSRCSNPTPGP).

Homodimer. Dimerization is essential for its transcriptional regulator activity. Interacts with IKZF3. Isoform 1 (via LXXLL motif), but not isoform 2, interacts with isoform 4 of RORA (via AF-2 motif). Interacts with STUB1, HSPA8 and HSPA1A/B. Interacts with PPP1CA, PPP1CB and PPP1CG. Interacts with KAT5 and HDAC7. Interacts with HDAC9 in the absence of T-cell stimulation. Interacts with USP7. Interacts with isoform 2 of ZFP90 and can form a complex with TRIM28 in the presence of isoform 2 of ZFP90. Interacts with RUNX1. Interacts with RORC. Interacts with RELA and NFATC2. Interacts with RUNX2, RUNX3 and IKZF4. Polyubiquitinated, leading to its proteasomal degradation in regulatory T-cells (Treg) which is mediated by STUB1 in a HSPA1A/B-dependent manner. Deubiquitinated by USP7 and USP44; leading to increase in protein stability. In terms of processing, phosphorylation at Ser-418 regulates its transcriptional repressor activity and consequently, regulatory T-cells (Treg) suppressive function. Dephosphorylated at Ser-418 by protein phosphatase 1 (PP1) in Treg cells derived from patients with rheumatoid arthritis. Phosphorylation by CDK2 negatively regulates its transcriptional activity and protein stability. Post-translationally, acetylation on lysine residues stabilizes FOXP3 and promotes differentiation of T-cells into induced regulatory T-cells (iTregs) associated with suppressive functions. Acetylation is mediated by a coordinated action of KAT5 and EP300/p300 acetyltransferases: EP300/p300 is required to enhance KAT5 autoacetylation, promoting acetylation of FOXP3 by KAT5. Deacetylated by SIRT1. Undergoes proteolytic cleavage in activated regulatory T-cells (Treg), and can be cleaved at either the N- or C-terminal site, or at both sites.

Its subcellular location is the nucleus. It is found in the cytoplasm. Its function is as follows. Transcriptional regulator which is crucial for the development and inhibitory function of regulatory T-cells (Treg). Plays an essential role in maintaining homeostasis of the immune system by allowing the acquisition of full suppressive function and stability of the Treg lineage, and by directly modulating the expansion and function of conventional T-cells. Can act either as a transcriptional repressor or a transcriptional activator depending on its interactions with other transcription factors, histone acetylases and deacetylases. The suppressive activity of Treg involves the coordinate activation of many genes, including CTLA4 and TNFRSF18 by FOXP3 along with repression of genes encoding cytokines such as interleukin-2 (IL2) and interferon-gamma (IFNG). Inhibits cytokine production and T-cell effector function by repressing the activity of two key transcription factors, RELA and NFATC2. Mediates transcriptional repression of IL2 via its association with histone acetylase KAT5 and histone deacetylase HDAC7. Can activate the expression of TNFRSF18, IL2RA and CTLA4 and repress the expression of IL2 and IFNG via its association with transcription factor RUNX1. Inhibits the differentiation of IL17 producing helper T-cells (Th17) by antagonizing RORC function, leading to down-regulation of IL17 expression, favoring Treg development. Inhibits the transcriptional activator activity of RORA. Can repress the expression of IL2 and IFNG via its association with transcription factor IKZF4. This chain is Forkhead box protein P3 (FOXP3), found in Homo sapiens (Human).